A 318-amino-acid polypeptide reads, in one-letter code: Protein W (318 aa).

Disordered regions lie at residues 1–23 (MDQDAFILKEDSEVEREAPGGRE) and 38–318 (SEPT…KKGA). The span at 7 to 20 (ILKEDSEVEREAPG) shows a compositional bias: basic and acidic residues. Positions 50–59 (LHNTINTPQG) are enriched in polar residues. At Ser-68 the chain carries Phosphoserine; by host. Residues 83–101 (RSGEESRVSGRTSKPEAEA) show a composition bias toward basic and acidic residues. Ser-125 carries the post-translational modification Phosphoserine; by host. Over residues 150 to 168 (GIEDENREMAAHPDKRGED) the composition is skewed to basic and acidic residues. Over residues 191–206 (ASNNGRSMEPGSSHSA) the composition is skewed to polar residues. Residues Ser-192, Ser-249, Ser-257, and Ser-260 each carry the phosphoserine; by host modification.

The sequence is that of Protein W (P/V/C) from Sendai virus (strain Z) (SeV).